The chain runs to 221 residues: GTP cyclohydrolase III (221 aa).

Belongs to the archaeal-type GTP cyclohydrolase family.

The catalysed reaction is GTP + 3 H2O = 2-amino-5-formylamino-6-(5-phospho-D-ribosylamino)pyrimidin-4(3H)-one + 2 phosphate + 2 H(+). Its function is as follows. Catalyzes the formation of 2-amino-5-formylamino-6-ribofuranosylamino-4(3H)-pyrimidinone ribonucleotide monophosphate and inorganic phosphate from GTP. Also has an independent pyrophosphate phosphohydrolase activity. The sequence is that of GTP cyclohydrolase III from Pyrobaculum calidifontis (strain DSM 21063 / JCM 11548 / VA1).